The sequence spans 351 residues: S-adenosylmethionine:tRNA ribosyltransferase-isomerase (351 aa).

The protein belongs to the QueA family. Monomer.

The protein localises to the cytoplasm. The enzyme catalyses 7-aminomethyl-7-carbaguanosine(34) in tRNA + S-adenosyl-L-methionine = epoxyqueuosine(34) in tRNA + adenine + L-methionine + 2 H(+). It functions in the pathway tRNA modification; tRNA-queuosine biosynthesis. Functionally, transfers and isomerizes the ribose moiety from AdoMet to the 7-aminomethyl group of 7-deazaguanine (preQ1-tRNA) to give epoxyqueuosine (oQ-tRNA). This Fusobacterium nucleatum subsp. nucleatum (strain ATCC 25586 / DSM 15643 / BCRC 10681 / CIP 101130 / JCM 8532 / KCTC 2640 / LMG 13131 / VPI 4355) protein is S-adenosylmethionine:tRNA ribosyltransferase-isomerase.